The primary structure comprises 370 residues: tRNA 2-selenouridine synthase (370 aa).

Residues 12 to 136 enclose the Rhodanese domain; sequence FLEDVPMMDT…MRNFLLDTTR (125 aa). Residue C95 is the S-selanylcysteine intermediate of the active site.

Belongs to the SelU family. In terms of assembly, monomer.

It carries out the reaction 5-methylaminomethyl-2-thiouridine(34) in tRNA + selenophosphate + (2E)-geranyl diphosphate + H2O + H(+) = 5-methylaminomethyl-2-selenouridine(34) in tRNA + (2E)-thiogeraniol + phosphate + diphosphate. It catalyses the reaction 5-methylaminomethyl-2-thiouridine(34) in tRNA + (2E)-geranyl diphosphate = 5-methylaminomethyl-S-(2E)-geranyl-thiouridine(34) in tRNA + diphosphate. The enzyme catalyses 5-methylaminomethyl-S-(2E)-geranyl-thiouridine(34) in tRNA + selenophosphate + H(+) = 5-methylaminomethyl-2-(Se-phospho)selenouridine(34) in tRNA + (2E)-thiogeraniol. The catalysed reaction is 5-methylaminomethyl-2-(Se-phospho)selenouridine(34) in tRNA + H2O = 5-methylaminomethyl-2-selenouridine(34) in tRNA + phosphate. Its function is as follows. Involved in the post-transcriptional modification of the uridine at the wobble position (U34) of tRNA(Lys), tRNA(Glu) and tRNA(Gln). Catalyzes the conversion of 2-thiouridine (S2U-RNA) to 2-selenouridine (Se2U-RNA). Acts in a two-step process involving geranylation of 2-thiouridine (S2U) to S-geranyl-2-thiouridine (geS2U) and subsequent selenation of the latter derivative to 2-selenouridine (Se2U) in the tRNA chain. In Azotobacter vinelandii (strain DJ / ATCC BAA-1303), this protein is tRNA 2-selenouridine synthase.